A 311-amino-acid polypeptide reads, in one-letter code: 4-hydroxy-3-methylbut-2-enyl diphosphate reductase (311 aa).

C12 contacts [4Fe-4S] cluster. (2E)-4-hydroxy-3-methylbut-2-enyl diphosphate contacts are provided by H41 and H74. Positions 41 and 74 each coordinate dimethylallyl diphosphate. Isopentenyl diphosphate contacts are provided by H41 and H74. C96 is a binding site for [4Fe-4S] cluster. H124 contributes to the (2E)-4-hydroxy-3-methylbut-2-enyl diphosphate binding site. Dimethylallyl diphosphate is bound at residue H124. Isopentenyl diphosphate is bound at residue H124. The Proton donor role is filled by E126. T167 serves as a coordination point for (2E)-4-hydroxy-3-methylbut-2-enyl diphosphate. C197 contacts [4Fe-4S] cluster. (2E)-4-hydroxy-3-methylbut-2-enyl diphosphate contacts are provided by S225, S226, N227, and S269. The dimethylallyl diphosphate site is built by S225, S226, N227, and S269. Residues S225, S226, N227, and S269 each contribute to the isopentenyl diphosphate site.

It belongs to the IspH family. [4Fe-4S] cluster serves as cofactor.

It carries out the reaction isopentenyl diphosphate + 2 oxidized [2Fe-2S]-[ferredoxin] + H2O = (2E)-4-hydroxy-3-methylbut-2-enyl diphosphate + 2 reduced [2Fe-2S]-[ferredoxin] + 2 H(+). The catalysed reaction is dimethylallyl diphosphate + 2 oxidized [2Fe-2S]-[ferredoxin] + H2O = (2E)-4-hydroxy-3-methylbut-2-enyl diphosphate + 2 reduced [2Fe-2S]-[ferredoxin] + 2 H(+). It functions in the pathway isoprenoid biosynthesis; dimethylallyl diphosphate biosynthesis; dimethylallyl diphosphate from (2E)-4-hydroxy-3-methylbutenyl diphosphate: step 1/1. Its pathway is isoprenoid biosynthesis; isopentenyl diphosphate biosynthesis via DXP pathway; isopentenyl diphosphate from 1-deoxy-D-xylulose 5-phosphate: step 6/6. Catalyzes the conversion of 1-hydroxy-2-methyl-2-(E)-butenyl 4-diphosphate (HMBPP) into a mixture of isopentenyl diphosphate (IPP) and dimethylallyl diphosphate (DMAPP). Acts in the terminal step of the DOXP/MEP pathway for isoprenoid precursor biosynthesis. This Aeromonas hydrophila subsp. hydrophila (strain ATCC 7966 / DSM 30187 / BCRC 13018 / CCUG 14551 / JCM 1027 / KCTC 2358 / NCIMB 9240 / NCTC 8049) protein is 4-hydroxy-3-methylbut-2-enyl diphosphate reductase.